The sequence spans 672 residues: Transcriptional activator of sulfur metabolism MET4 (672 aa).

Positions 1 to 10 (MKQEQSHEGD) are enriched in basic and acidic residues. Residues 1–44 (MKQEQSHEGDSYSTEFINLFGKDTATHPSSNNGANNNGMGSTNS) form a disordered region. Low complexity predominate over residues 29–44 (SSNNGANNNGMGSTNS). 3 consecutive short sequence motifs (9aaTAD) follow at residues 89–97 (ILLEQLAYV), 102–110 (PSLDNEFSN), and 109–117 (SNVDWNVNT). The tract at residues 95–144 (AYVDNFIPSLDNEFSNVDWNVNTTHNNANNNGADTFSSINANPFDLDEQL) is transcriptional activation. Disordered regions lie at residues 157 to 265 (IFPD…NMTS) and 299 to 347 (TTHT…NITV). Residues 165–174 (SNNNNNSNNG) are compositionally biased toward low complexity. The span at 175–188 (NDDHSNHDVLHEDP) shows a compositional bias: basic and acidic residues. An inhibitory region; AdoMet responsiveness; required for interaction with MET30 region spans residues 188 to 235 (PSTNNRQRNPHFLTQRRNTFLTSQYDQSKSRFSSKNKRNGNNGETNNF). The segment covering 202–214 (QRRNTFLTSQYDQ) has biased composition (polar residues). A compositionally biased stretch (low complexity) spans 226–238 (NGNNGETNNFGDN). 2 stretches are compositionally biased toward polar residues: residues 251-265 (GSPS…NMTS) and 301-321 (HTPN…SSSQ). An auxiliary; required for high transcriptional activity under nonrepressive growth conditions region spans residues 312 to 375 (VTSAQNSSSQ…NVPNGAYNSL (64 aa)). A required for interaction with MET31 and MET32 region spans residues 375 to 403 (LISAGFDNDQIDAIAAIMAYHHQKKIREN). Residue S416 is modified to Phosphoserine. A disordered region spans residues 475–574 (PKSNNIHNQR…DNEDDEYDDA (100 aa)). The span at 477–486 (SNNIHNQRQP) shows a compositional bias: polar residues. Residues 487–498 (SRNDHKISRESD) show a composition bias toward basic and acidic residues. Residues 499–512 (GNNGNDNVHHNNAV) are compositionally biased toward low complexity. Composition is skewed to basic and acidic residues over residues 519–528 (RGDEIAKIRS) and 537–565 (SDHK…KYSD). Phosphoserine is present on S564. Positions 586 to 649 (KKELGDDDED…KLLKNLVLSS (64 aa)) constitute a bZIP domain. The basic motif stretch occupies residues 601–612 (KKSHQKKKLKEK). A coiled-coil region spans residues 609-648 (LKEKELESSIHELTEIAASLQKRIHTLETENKLLKNLVLS). A leucine-zipper region spans residues 614–642 (LESSIHELTEIAASLQKRIHTLETENKLL).

Belongs to the bZIP family. In terms of assembly, interacts with MET30. Tethered to DNA through two alternate complexes associating MET4 with MET28 and either MET31 or MET32. Interacts with MET28 and CBF1 through its leucine zipper to form a heteromeric complex.

Its subcellular location is the nucleus. In terms of biological role, positive trans-acting factor capable of stimulating the transcription of the MET genes from the methionine biosynthetic pathway. MET4, MET28 and CBF1 are required for full induction of MET25 and MET16 gene transcription. MET4 controls as well the derepression of MET6. Required for the transcription of genes necessary for sulfur amino acid biosynthesis. Involved in the transcription activation of MET28 and MET30. Required for MET3 gene expression via assembly of the MET4-MET28-MET31 and MET4-MET28-MET32 complexes. Involved in response to cadmium and arsenic. Cadmium-activated MET4 also induces glutathione biosynthesis. The chain is Transcriptional activator of sulfur metabolism MET4 (MET4) from Saccharomyces cerevisiae (strain ATCC 204508 / S288c) (Baker's yeast).